Reading from the N-terminus, the 267-residue chain is GTP cyclohydrolase MptA (267 aa).

It belongs to the GTP cyclohydrolase IV family. In terms of assembly, homodimer. Requires Fe(2+) as cofactor.

The catalysed reaction is GTP + H2O = 7,8-dihydroneopterin 2',3'-cyclic phosphate + formate + diphosphate + H(+). It participates in cofactor biosynthesis; 5,6,7,8-tetrahydromethanopterin biosynthesis. Functionally, converts GTP to 7,8-dihydro-D-neopterin 2',3'-cyclic phosphate, the first intermediate in the biosynthesis of coenzyme methanopterin. The sequence is that of GTP cyclohydrolase MptA from Thermococcus kodakarensis (strain ATCC BAA-918 / JCM 12380 / KOD1) (Pyrococcus kodakaraensis (strain KOD1)).